We begin with the raw amino-acid sequence, 143 residues long: Small ribosomal subunit protein uS9 (143 aa).

A disordered region spans residues 123 to 143; sequence RPEPKKFGGRGARARFQKSYR. Over residues 134–143 the composition is skewed to basic residues; sequence ARARFQKSYR.

Belongs to the universal ribosomal protein uS9 family.

In Eremothecium gossypii (strain ATCC 10895 / CBS 109.51 / FGSC 9923 / NRRL Y-1056) (Yeast), this protein is Small ribosomal subunit protein uS9 (RPS16).